A 160-amino-acid chain; its full sequence is MSGHGAPDIDPTALDGSGLRVTVVAGRWHDEISAGLLAGARRVLDAAGVTTTVIRVPGSFELPVVARAALDAGADAVVALGVIIRGGTPHFEYVSDAATSGLTQASLLAGKPIGFGLLTLDDEQQGIDRAGLPGSKEDKGAEAAEAAVTTALLLKSIRGA.

Residues W28, 59 to 61 (SFE), and 82 to 84 (VII) contribute to the 5-amino-6-(D-ribitylamino)uracil site. 87-88 (GT) is a (2S)-2-hydroxy-3-oxobutyl phosphate binding site. The active-site Proton donor is the H90. Position 115 (F115) interacts with 5-amino-6-(D-ribitylamino)uracil. Position 129 (R129) interacts with (2S)-2-hydroxy-3-oxobutyl phosphate.

The protein belongs to the DMRL synthase family.

The catalysed reaction is (2S)-2-hydroxy-3-oxobutyl phosphate + 5-amino-6-(D-ribitylamino)uracil = 6,7-dimethyl-8-(1-D-ribityl)lumazine + phosphate + 2 H2O + H(+). It functions in the pathway cofactor biosynthesis; riboflavin biosynthesis; riboflavin from 2-hydroxy-3-oxobutyl phosphate and 5-amino-6-(D-ribitylamino)uracil: step 1/2. Its function is as follows. Catalyzes the formation of 6,7-dimethyl-8-ribityllumazine by condensation of 5-amino-6-(D-ribitylamino)uracil with 3,4-dihydroxy-2-butanone 4-phosphate. This is the penultimate step in the biosynthesis of riboflavin. In Clavibacter michiganensis subsp. michiganensis (strain NCPPB 382), this protein is 6,7-dimethyl-8-ribityllumazine synthase.